The following is a 30-amino-acid chain: MNKQRFLFAAKISGIHFLLSLTVAALLAGL.

This is Fimbrial assembly protein, serogroup B1 (fimB) from Dichelobacter nodosus (Bacteroides nodosus).